A 366-amino-acid chain; its full sequence is tRNA-queuosine alpha-mannosyltransferase (366 aa).

This sequence belongs to the glycosyltransferase group 1 family. Glycosyltransferase 4 subfamily.

The protein resides in the cytoplasm. The protein localises to the nucleus. The enzyme catalyses queuosine(34) in tRNA(Asp) + GDP-alpha-D-mannose = O-4''-alpha-D-mannosylqueuosine(34) in tRNA(Asp) + GDP + H(+). In terms of biological role, glycosyltransferase that specifically catalyzes mannosylation of cytoplasmic tRNA(Asp) modified with queuosine at position 34 (queuosine(34)). Mannosylates the cyclopentene moiety of queuosine(34) in tRNA(Asp) to form mannosyl-queuosine(34). Mannosylation of queuosine(34) in tRNA(Asp) is required to slow-down elongation at cognate codons, GAC and GAU, thereby regulating protein translation. This is tRNA-queuosine alpha-mannosyltransferase (GTDC1) from Bos taurus (Bovine).